The chain runs to 1142 residues: ABC transporter F family member 4 (1142 aa).

Positions 1 to 564 (MGPKGKKKGQ…EDAFELAKKK (564 aa)) are disordered. Low complexity-rich tracts occupy residues 121-143 (PQPVKKGGKPAPQKKGGKQQQQQ), 153-166 (PQPVKKGGKPAPQK), and 182-195 (PQPVKKGGKPAPQK). Composition is skewed to acidic residues over residues 203–212 (SEDEDEEDEV) and 233–244 (EEEEEEEEEEIE). Composition is skewed to basic residues over residues 249–261 (KGGKAPKPKKGGK) and 280–290 (KGGKKDKKKGS). Residues 295-306 (EEEEEEEEEEIE) show a composition bias toward acidic residues. Basic and acidic residues predominate over residues 314 to 328 (NKKDQKKGGKGKHVE). The segment covering 329–340 (EEEEEEEEEEIE) has biased composition (acidic residues). Basic residues predominate over residues 377–387 (KGGKKDKKKGS). 2 stretches are compositionally biased toward acidic residues: residues 392–404 (EEEEEEEEEEEIE) and 441–451 (EEEEQEQEEEE). Positions 456-467 (SKSNKKDKKKGK) are enriched in basic residues. Over residues 471–480 (EEEEEEEEEE) the composition is skewed to acidic residues. The span at 485-496 (SKSNKKDKKKGS) shows a compositional bias: basic residues. Residues 501-518 (EEEEEEEEEEEEEKEEEE) show a composition bias toward acidic residues. A compositionally biased stretch (basic residues) spans 530–548 (AKKVKKVDKKEKKKEKEKK). ABC transporter domains lie at 604–857 (IKFD…RSKE) and 923–1139 (LVFK…DNMV). ATP is bound by residues 636–643 (GRNGIGKS) and 956–963 (GMNGVGKS).

Belongs to the ABC transporter superfamily.

The chain is ABC transporter F family member 4 (abcF4) from Dictyostelium discoideum (Social amoeba).